The sequence spans 185 residues: CASP-like protein 2D1 (185 aa).

At 1 to 15 the chain is on the cytoplasmic side; that stretch reads MRTHIDDSASGKNHH. A helical membrane pass occupies residues 16 to 36; that stretch reads LPMLWFFDSSLRLCAIPLSVA. At 37–64 the chain is on the extracellular side; the sequence is TMWITVTNKEDNSSYGMLKYNNLSALKY. 2 N-linked (GlcNAc...) asparagine glycosylation sites follow: Asn48 and Asn58. A helical membrane pass occupies residues 65 to 85; that stretch reads MVLVSALCACYALLAAACSLV. Over 86-92 the chain is Cytoplasmic; the sequence is RCFVSKA. Residues 93–113 traverse the membrane as a helical segment; the sequence is WIFFVSDQIVAYLAITSVAAV. Topologically, residues 114-145 are extracellular; the sequence is MEMYYLAYNGAKEDSWSEACSSYGSFCSKVKL. A helical membrane pass occupies residues 146 to 166; it reads ALILHTITFCCFFVIAVISAF. The Cytoplasmic portion of the chain corresponds to 167 to 185; it reads RAFSVFDPPFVNSQEVQGD.

Belongs to the Casparian strip membrane proteins (CASP) family. As to quaternary structure, homodimer and heterodimers.

The protein resides in the cell membrane. The protein is CASP-like protein 2D1 of Glycine max (Soybean).